Reading from the N-terminus, the 98-residue chain is NADH-ubiquinone oxidoreductase chain 4L (98 aa).

3 helical membrane passes run 1–21, 29–49, and 61–81; these read MPVV…GLLI, SLLC…VTVL, and IILL…LVMV.

Belongs to the complex I subunit 4L family. In terms of assembly, core subunit of respiratory chain NADH dehydrogenase (Complex I) which is composed of 45 different subunits.

It is found in the mitochondrion inner membrane. The enzyme catalyses a ubiquinone + NADH + 5 H(+)(in) = a ubiquinol + NAD(+) + 4 H(+)(out). Core subunit of the mitochondrial membrane respiratory chain NADH dehydrogenase (Complex I) which catalyzes electron transfer from NADH through the respiratory chain, using ubiquinone as an electron acceptor. Part of the enzyme membrane arm which is embedded in the lipid bilayer and involved in proton translocation. This is NADH-ubiquinone oxidoreductase chain 4L (MT-ND4L) from Ursus americanus (American black bear).